We begin with the raw amino-acid sequence, 231 residues long: Ribonuclease 3 (231 aa).

Positions 8–135 (VGDLERRIGH…LMAALYQDGG (128 aa)) constitute an RNase III domain. E48 is a Mg(2+) binding site. Active-site residues include D52 and E124. E124 contacts Mg(2+). The 70-residue stretch at 161–230 (DPKTALQEWA…AKALLEREGA (70 aa)) folds into the DRBM domain. Positions 210-231 (GKSRQEAEKAAAKALLEREGAG) are disordered. Residues 212–231 (SRQEAEKAAAKALLEREGAG) are compositionally biased toward basic and acidic residues.

Belongs to the ribonuclease III family. Homodimer. The cofactor is Mg(2+).

It localises to the cytoplasm. The enzyme catalyses Endonucleolytic cleavage to 5'-phosphomonoester.. Functionally, digests double-stranded RNA. Involved in the processing of primary rRNA transcript to yield the immediate precursors to the large and small rRNAs (23S and 16S). Processes some mRNAs, and tRNAs when they are encoded in the rRNA operon. Processes pre-crRNA and tracrRNA of type II CRISPR loci if present in the organism. This is Ribonuclease 3 from Caulobacter vibrioides (strain ATCC 19089 / CIP 103742 / CB 15) (Caulobacter crescentus).